We begin with the raw amino-acid sequence, 480 residues long: Protein nucleotidyltransferase YdiU (480 aa).

ATP is bound by residues G86, G88, R89, K109, D121, G122, R172, and R179. D248 (proton acceptor) is an active-site residue. N249 and D258 together coordinate Mg(2+). D258 contacts ATP.

It belongs to the SELO family. It depends on Mg(2+) as a cofactor. Requires Mn(2+) as cofactor.

It carries out the reaction L-seryl-[protein] + ATP = 3-O-(5'-adenylyl)-L-seryl-[protein] + diphosphate. The catalysed reaction is L-threonyl-[protein] + ATP = 3-O-(5'-adenylyl)-L-threonyl-[protein] + diphosphate. It catalyses the reaction L-tyrosyl-[protein] + ATP = O-(5'-adenylyl)-L-tyrosyl-[protein] + diphosphate. The enzyme catalyses L-histidyl-[protein] + UTP = N(tele)-(5'-uridylyl)-L-histidyl-[protein] + diphosphate. It carries out the reaction L-seryl-[protein] + UTP = O-(5'-uridylyl)-L-seryl-[protein] + diphosphate. The catalysed reaction is L-tyrosyl-[protein] + UTP = O-(5'-uridylyl)-L-tyrosyl-[protein] + diphosphate. Its function is as follows. Nucleotidyltransferase involved in the post-translational modification of proteins. It can catalyze the addition of adenosine monophosphate (AMP) or uridine monophosphate (UMP) to a protein, resulting in modifications known as AMPylation and UMPylation. The chain is Protein nucleotidyltransferase YdiU from Salmonella agona (strain SL483).